The primary structure comprises 294 residues: Nucleotide-binding protein DICTH_1001 (294 aa).

10-17 (GLSGAGKS) contributes to the ATP binding site. Position 61-64 (61-64 (DIRT)) interacts with GTP.

Belongs to the RapZ-like family.

Functionally, displays ATPase and GTPase activities. The chain is Nucleotide-binding protein DICTH_1001 from Dictyoglomus thermophilum (strain ATCC 35947 / DSM 3960 / H-6-12).